The chain runs to 946 residues: Alanine--tRNA ligase, cytoplasmic (946 aa).

Zn(2+) is bound by residues histidine 591, histidine 595, cysteine 710, and histidine 714.

It belongs to the class-II aminoacyl-tRNA synthetase family. In terms of assembly, monomer. Zn(2+) is required as a cofactor.

Its subcellular location is the cytoplasm. It catalyses the reaction tRNA(Ala) + L-alanine + ATP = L-alanyl-tRNA(Ala) + AMP + diphosphate. Functionally, catalyzes the attachment of alanine to tRNA(Ala) in a two-step reaction: alanine is first activated by ATP to form Ala-AMP and then transferred to the acceptor end of tRNA(Ala). Also edits incorrectly charged tRNA(Ala) via its editing domain. In Dictyostelium discoideum (Social amoeba), this protein is Alanine--tRNA ligase, cytoplasmic (alaS).